Reading from the N-terminus, the 309-residue chain is Malate dehydrogenase (309 aa).

NAD(+) contacts are provided by residues 8 to 13 (GAGLVG) and Asp33. Substrate is bound by residues Arg82 and Arg88. NAD(+)-binding positions include Asn95 and 118–120 (VSN). Substrate contacts are provided by Asn120 and Arg151. His175 functions as the Proton acceptor in the catalytic mechanism.

It belongs to the LDH/MDH superfamily. MDH type 3 family.

The enzyme catalyses (S)-malate + NAD(+) = oxaloacetate + NADH + H(+). Catalyzes the reversible oxidation of malate to oxaloacetate. In Pseudomonas putida (strain GB-1), this protein is Malate dehydrogenase.